The sequence spans 347 residues: MKPPILIIIMATIMTGTMIVMLSSHWLLIWIGFEMNMLAVIPVLMKKYNPRTMEASTKYFLTQATASMLLMMGVTINLLYSGQWVVSKISNPAASIMMTIALTMKLGLSPFHFWVPEVTQGITLTSGMILLTWQKIAPMSVLYQISPSINTNLLMLVALVSVLVGGWGGLNQTQLRKIMAYSSIAHMGWMAAIIIYNPTMMILNLVLYILMTLSTFMLFMLNSSTTTLSLSHMWNKFPLITSIILILMLSLGGLPPLSGFIPKWMIIQELTKNNMIIIPTLMAITALLNLYFYLRLTYSTALTMFPSANNMKMKWQFEHTKKTILLPPLIITSTMLLPLTPMLSILD.

The next 11 membrane-spanning stretches (helical) occupy residues 3–23 (PPIL…VMLS), 25–45 (HWLL…PVLM), 66–86 (ASML…QWVV), 96–116 (IMMT…FWVP), 122–142 (ITLT…MSVL), 149–169 (INTN…GWGG), 178–198 (IMAY…IYNP), 201–221 (MILN…LFML), 237–257 (FPLI…LPPL), 274–294 (NMII…YFYL), and 323–343 (TILL…TPML).

Belongs to the complex I subunit 2 family. As to quaternary structure, core subunit of respiratory chain NADH dehydrogenase (Complex I) which is composed of 45 different subunits. Interacts with TMEM242.

Its subcellular location is the mitochondrion inner membrane. It catalyses the reaction a ubiquinone + NADH + 5 H(+)(in) = a ubiquinol + NAD(+) + 4 H(+)(out). In terms of biological role, core subunit of the mitochondrial membrane respiratory chain NADH dehydrogenase (Complex I) which catalyzes electron transfer from NADH through the respiratory chain, using ubiquinone as an electron acceptor. Essential for the catalytic activity and assembly of complex I. The chain is NADH-ubiquinone oxidoreductase chain 2 from Canis rufus (Red wolf).